A 301-amino-acid polypeptide reads, in one-letter code: tRNA dimethylallyltransferase (301 aa).

Position 2–9 (2–9 (GPTASGKT)) interacts with ATP. Substrate is bound at residue 4–9 (TASGKT). Interaction with substrate tRNA regions lie at residues 27–30 (DSAM) and 151–155 (QRIQR).

It belongs to the IPP transferase family. In terms of assembly, monomer. The cofactor is Mg(2+).

It catalyses the reaction adenosine(37) in tRNA + dimethylallyl diphosphate = N(6)-dimethylallyladenosine(37) in tRNA + diphosphate. Catalyzes the transfer of a dimethylallyl group onto the adenine at position 37 in tRNAs that read codons beginning with uridine, leading to the formation of N6-(dimethylallyl)adenosine (i(6)A). In Coxiella burnetii (strain CbuK_Q154) (Coxiella burnetii (strain Q154)), this protein is tRNA dimethylallyltransferase.